The primary structure comprises 47 residues: MVTEGLKPHISIKKKKRKSGFLARMRTKSGRKIIARRRRKGRKRLAP.

Positions 1–47 are disordered; it reads MVTEGLKPHISIKKKKRKSGFLARMRTKSGRKIIARRRRKGRKRLAP. The span at 10-47 shows a compositional bias: basic residues; sequence ISIKKKKRKSGFLARMRTKSGRKIIARRRRKGRKRLAP.

This sequence belongs to the bacterial ribosomal protein bL34 family.

In Aquifex aeolicus (strain VF5), this protein is Large ribosomal subunit protein bL34 (rpmH).